A 535-amino-acid chain; its full sequence is Beta-amylase (535 aa).

Positions 51, 91, and 99 each coordinate substrate. Glutamate 184 (proton donor) is an active-site residue. Residues lysine 293, histidine 298, and threonine 340 each coordinate substrate. Glutamate 378 functions as the Proton acceptor in the catalytic mechanism. Substrate is bound by residues 379–380 (NA) and arginine 418. A run of 3 repeats spans residues 489–499 (GPTGGMGGQAE), 500–510 (GPTCGMGGQVK), and 511–521 (GPTGGMGGQAE). Residues 489–532 (GPTGGMGGQAEGPTCGMGGQVKGPTGGMGGQAEDPTSGIGGELP) are 4 X 11 AA tandem repeats. Residues 513–535 (TGGMGGQAEDPTSGIGGELPATM) form a disordered region. The stretch at 522–532 (DPTSGIGGELP) is one 4; approximate repeat.

Belongs to the glycosyl hydrolase 14 family. Monomer.

The catalysed reaction is Hydrolysis of (1-&gt;4)-alpha-D-glucosidic linkages in polysaccharides so as to remove successive maltose units from the non-reducing ends of the chains.. The polypeptide is Beta-amylase (BMY1) (Hordeum vulgare (Barley)).